We begin with the raw amino-acid sequence, 1755 residues long: Transposon Ty1-BL Gag-Pol polyprotein (1755 aa).

Composition is skewed to polar residues over residues S20–D31, V46–P55, and V137–H168. Disordered stretches follow at residues S20–P84, V137–P173, and Q350–S420. The interval N299–H401 is RNA-binding. A compositionally biased stretch (basic and acidic residues) spans S363–R372. The span at T373–G411 shows a compositional bias: polar residues. Residue D461 is the For protease activity; shared with dimeric partner of the active site. The integrase-type zinc finger-like stretch occupies residues N583–C640. An Integrase catalytic domain is found at N660–P835. D671 and D736 together coordinate Mg(2+). The segment at S956–Y1172 is disordered. Low complexity predominate over residues S960–T969. Composition is skewed to polar residues over residues S1005 to S1017 and M1031 to S1043. Basic and acidic residues predominate over residues K1044 to S1053. Polar residues-rich tracts occupy residues Y1054–E1082 and S1095–L1106. The Bipartite nuclear localization signal motif lies at K1178–R1212. The region spanning N1338–Q1476 is the Reverse transcriptase Ty1/copia-type domain. Residues D1346, D1427, D1428, D1610, E1652, and D1685 each coordinate Mg(2+). In terms of domain architecture, RNase H Ty1/copia-type spans D1610–K1752.

The capsid protein forms a homotrimer, from which the VLPs are assembled. The protease is a homodimer, whose active site consists of two apposed aspartic acid residues. In terms of processing, initially, virus-like particles (VLPs) are composed of the structural unprocessed proteins Gag and Gag-Pol, and also contain the host initiator methionine tRNA (tRNA(i)-Met) which serves as a primer for minus-strand DNA synthesis, and a dimer of genomic Ty RNA. Processing of the polyproteins occurs within the particle and proceeds by an ordered pathway, called maturation. First, the protease (PR) is released by autocatalytic cleavage of the Gag-Pol polyprotein yielding capsid protein p45 and a Pol-p154 precursor protein. This cleavage is a prerequisite for subsequent processing of Pol-p154 at the remaining sites to release the mature structural and catalytic proteins. Maturation takes place prior to the RT reaction and is required to produce transposition-competent VLPs.

Its subcellular location is the cytoplasm. It is found in the nucleus. It catalyses the reaction DNA(n) + a 2'-deoxyribonucleoside 5'-triphosphate = DNA(n+1) + diphosphate. The enzyme catalyses Endonucleolytic cleavage to 5'-phosphomonoester.. Its function is as follows. Capsid protein (CA) is the structural component of the virus-like particle (VLP), forming the shell that encapsulates the retrotransposons dimeric RNA genome. The particles are assembled from trimer-clustered units and there are holes in the capsid shells that allow for the diffusion of macromolecules. CA also has nucleocapsid-like chaperone activity, promoting primer tRNA(i)-Met annealing to the multipartite primer-binding site (PBS), dimerization of Ty1 RNA and initiation of reverse transcription. Functionally, the aspartyl protease (PR) mediates the proteolytic cleavages of the Gag and Gag-Pol polyproteins after assembly of the VLP. Reverse transcriptase/ribonuclease H (RT) is a multifunctional enzyme that catalyzes the conversion of the retro-elements RNA genome into dsDNA within the VLP. The enzyme displays a DNA polymerase activity that can copy either DNA or RNA templates, and a ribonuclease H (RNase H) activity that cleaves the RNA strand of RNA-DNA heteroduplexes during plus-strand synthesis and hydrolyzes RNA primers. The conversion leads to a linear dsDNA copy of the retrotransposon that includes long terminal repeats (LTRs) at both ends. In terms of biological role, integrase (IN) targets the VLP to the nucleus, where a subparticle preintegration complex (PIC) containing at least integrase and the newly synthesized dsDNA copy of the retrotransposon must transit the nuclear membrane. Once in the nucleus, integrase performs the integration of the dsDNA into the host genome. The polypeptide is Transposon Ty1-BL Gag-Pol polyprotein (TY1B-BL) (Saccharomyces cerevisiae (strain ATCC 204508 / S288c) (Baker's yeast)).